Here is a 96-residue protein sequence, read N- to C-terminus: Co-chaperonin GroES (96 aa).

This sequence belongs to the GroES chaperonin family. As to quaternary structure, heptamer of 7 subunits arranged in a ring. Interacts with the chaperonin GroEL.

The protein localises to the cytoplasm. Functionally, together with the chaperonin GroEL, plays an essential role in assisting protein folding. The GroEL-GroES system forms a nano-cage that allows encapsulation of the non-native substrate proteins and provides a physical environment optimized to promote and accelerate protein folding. GroES binds to the apical surface of the GroEL ring, thereby capping the opening of the GroEL channel. The polypeptide is Co-chaperonin GroES (Aromatoleum aromaticum (strain DSM 19018 / LMG 30748 / EbN1) (Azoarcus sp. (strain EbN1))).